We begin with the raw amino-acid sequence, 97 residues long: UPF0250 protein RSc0326 (97 aa).

The protein belongs to the UPF0250 family.

The polypeptide is UPF0250 protein RSc0326 (Ralstonia nicotianae (strain ATCC BAA-1114 / GMI1000) (Ralstonia solanacearum)).